The following is a 74-amino-acid chain: Alpha-conotoxin GeXIVA (74 aa).

The signal sequence occupies residues 1–22; the sequence is MKLTCVLIITVLFLTACQLTTA. Positions 23–46 are excised as a propeptide; sequence VTYSRGEHKHRALMSTGTNYRLPK. The segment at 56 to 64 is interacts with alpha-9-alpha-10 (CHRNA9-CHRNA10) nAChR; sequence RSPYDRRRR.

The protein belongs to the conotoxin O1 superfamily. The native disulfide bond pairing has not been studied. Three isomers may exist: the bead isomer (I-II; III-IV), the globular isomer (I-III; II-IV), the ribbon isomer (I-IV; II-III). They have all been synthesized and their activity tested. All of them show similar potency on alpha-9-alpha-10 (CHRNA9-CHRNA10) nAChR, showing that disulfide bonds does not significantly affect their activity. In addition, removal of disulfide bonds does not affect the activity on alpha-9-alpha-10 (CHRNA9-CHRNA10) nAChR either. In terms of tissue distribution, expressed by the venom duct.

The protein resides in the secreted. Functionally, alpha-conotoxins act on postsynaptic membranes, they bind to the nicotinic acetylcholine receptors (nAChR) and thus inhibit them. This toxin is very potent on alpha-9-alpha-10/CHRNA9-CHRNA10 nAChR (IC(50)=4.61-12 nM for the bead isomer (I-II; III-IV), IC(50)=7-16 nM for the ribbon isomer (I-IV; II-III) and IC(50)=22.7 nM for the globular isomer (I-III; II-IV)). The bead isomer also shows a weak inhibition on other nAChRs (alpha-1-beta-1-delta-epsilon/CHRNA1-CHRNB1-CHRND-CHRNE, alpha-7/CHRNA7, alpha-6/alpha-3-beta-2-beta-3 (CHRNA6/CHRNA3-CHRNB2-CHRNB3), alpha-3-beta-2/CHRNA3-CHRNB2, alpha-2-beta-2/CHRNA2-CHRNB2, alpha-6/alpha-3-beta-4 (CHRNA6/CHRNA3-CHRNB4), alpha-4-beta-2/CHRNA4-CHRNB2, alpha-4-beta-4/CHRNA4-CHRNB4, alpha-2-beta-4/CHRNA2-CHRNB4, alpha-3-beta-4/CHRNA3-CHRNB4). The toxin blockade is voltage-dependent, and its binding site does not overlap with the binding site of the competitive antagonist alpha-conotoxin RgIA. The toxin inhibits Sf9 cell growth. Both the bead and ribbon isomers relieve pain effects in the rat chronic constriction injury (CCI) model of neuropathic pain, and in the acute pain model of tail flick test, but have no effect on motor performance. In Conus generalis (General cone), this protein is Alpha-conotoxin GeXIVA.